A 100-amino-acid polypeptide reads, in one-letter code: MSHVDVTVDEATINAIRQRMLETGDWERIQKLLRAHLEESGWVDDLKDLAKEKARAQDVPNLENLVKQISESAAGMVSDNVKRDVMLEIESVLDREVDQA.

This sequence belongs to the ENY2 family. In terms of assembly, component of the nuclear pore complex (NPC)-associated TREX-2 complex (transcription and export complex 2), composed of at least SUS1, SAC3, THP1, SEM1, and CDC31. TREX-2 contains 2 SUS1 chains. The TREX-2 complex interacts with the nucleoporin NUP1. Component of the 1.8 MDa SAGA transcription coactivator-HAT complex. SAGA is built of 5 distinct domains with specialized functions. Within the SAGA complex, SUS1, SGF11, SGF73 and UBP8 form an additional subcomplex of SAGA called the DUB module (deubiquitination module). Interacts directly with THP1, SAC3, SGF11, and with the RNA polymerase II.

It localises to the nucleus. Its subcellular location is the nucleoplasm. The protein localises to the cytoplasm. The protein resides in the P-body. Functionally, involved in mRNA export coupled transcription activation by association with both the TREX-2 and the SAGA complexes. At the promoters, SAGA is required for recruitment of the basal transcription machinery. It influences RNA polymerase II transcriptional activity through different activities such as TBP interaction and promoter selectivity, interaction with transcription activators, and chromatin modification through histone acetylation and deubiquitination. Within the SAGA complex, participates in a subcomplex required for deubiquitination of H2B and for the maintenance of steady-state H3 methylation levels. The TREX-2 complex functions in docking export-competent ribonucleoprotein particles (mRNPs) to the nuclear entrance of the nuclear pore complex (nuclear basket). TREX-2 participates in mRNA export and accurate chromatin positioning in the nucleus by tethering genes to the nuclear periphery. May also be involved in cytoplasmic mRNA decay by interaction with components of P-bodies. The protein is Transcription and mRNA export factor SUS1 of Cryptococcus neoformans var. neoformans serotype D (strain B-3501A) (Filobasidiella neoformans).